Reading from the N-terminus, the 831-residue chain is Phenylalanine--tRNA ligase beta subunit (831 aa).

Residues G44–A155 enclose the tRNA-binding domain. Positions W414–S489 constitute a B5 domain. Mg(2+) contacts are provided by D467, D473, E476, and E477. In terms of domain architecture, FDX-ACB spans S737–R830.

It belongs to the phenylalanyl-tRNA synthetase beta subunit family. Type 1 subfamily. In terms of assembly, tetramer of two alpha and two beta subunits. Mg(2+) serves as cofactor.

The protein localises to the cytoplasm. The catalysed reaction is tRNA(Phe) + L-phenylalanine + ATP = L-phenylalanyl-tRNA(Phe) + AMP + diphosphate + H(+). This Mycobacterium bovis (strain ATCC BAA-935 / AF2122/97) protein is Phenylalanine--tRNA ligase beta subunit.